We begin with the raw amino-acid sequence, 206 residues long: MKVKICGVTHPEDAEYAALLGADYIGVIFAEKSKRKTSLSMAKSIADTTKRLGAEPVGVFVEQTTDQIIAICEQTGIKTIQLHSTFPLGALENLLRDYSIIYAISVRENGDVCHPQSLPPKVIPLYDTEKGGTGKQFNWKAFSLPKDTFWMLAGGLNPKNIEEAVATLHPNGVDVATGVEFPNKTRKDPDLLKAFILSAKKSGEKI.

Belongs to the TrpF family.

The catalysed reaction is N-(5-phospho-beta-D-ribosyl)anthranilate = 1-(2-carboxyphenylamino)-1-deoxy-D-ribulose 5-phosphate. The protein operates within amino-acid biosynthesis; L-tryptophan biosynthesis; L-tryptophan from chorismate: step 3/5. The chain is N-(5'-phosphoribosyl)anthranilate isomerase from Chlamydia caviae (strain ATCC VR-813 / DSM 19441 / 03DC25 / GPIC) (Chlamydophila caviae).